A 180-amino-acid chain; its full sequence is Glycoprotein Xg (180 aa).

The N-terminal stretch at 1-21 (MESWWGLPCLAFLCFLMHARG) is a signal peptide. Residues 22-142 (QRDFDLADAL…GNPEGNMVAK (121 aa)) are Extracellular-facing. The interval 28-133 (ADALDDPEPT…HGGDHHSTYG (106 aa)) is disordered. Residues 47–57 (KPKPPYYPQPE) show a composition bias toward pro residues. The chain crosses the membrane as a helical span at residues 143–163 (IVSPIVSVVVVTLLGAAASYF). The Cytoplasmic segment spans residues 164–180 (KLNNRRNCFRTHEPENV).

This sequence belongs to the CD99 family. Post-translationally, O-glycosylated. Expressed in erythroid tissues, including thymus, bone marrow and fetal liver, and in several nonerythroid tissues, such as heart, placenta, skeletal muscle, thyroid and trachea, as well as in skin fibroblasts. Expression is low or undetectable in other tissues.

Its subcellular location is the cell membrane. This is Glycoprotein Xg (XG) from Homo sapiens (Human).